We begin with the raw amino-acid sequence, 89 residues long: Antimicrobial peptide Ar-AMP (89 aa).

A signal peptide spans 1 to 25; the sequence is MVNMKSVALIVIVMMAFMMVDPSMG. One can recognise a Chitin-binding type-1 domain in the interval 26 to 68; that stretch reads AGECVQGRCPSGMCCSQFGYCGRGPKYCGRASTTVDHQADAAA. 3 cysteine pairs are disulfide-bonded: C29/C40, C34/C46, and C39/C53. A propeptide spans 56–89 (removed in mature form); that stretch reads ASTTVDHQADAAAAAATKTANNPTDAKLAGAGSP.

Its function is as follows. Chitin-binding protein that inhibits the growth of the fungal pathogens B.cinerea, F.culmorum, H.sativum and A.consortiale, but not that of R.solani. Induces morphological changes in the fungal pathogens F.culmorum, H.sativum and R.solani, but not in A.consortiale and B.cinerea. Has antibacterial activity against the Gram-positive bacterium B.subtilis, but lacks antibacterial activity against the Gram-negative bacterium E.coli. The polypeptide is Antimicrobial peptide Ar-AMP (Amaranthus retroflexus (Redroot amaranth)).